Reading from the N-terminus, the 441-residue chain is UDP-N-acetylglucosamine--N-acetylmuramyl-(pentapeptide) pyrophosphoryl-undecaprenol N-acetylglucosamine transferase (441 aa).

Residues 28–30, Asn140, Arg176, Ser204, Ile257, and Gln302 each bind UDP-N-acetyl-alpha-D-glucosamine; that span reads TGG.

The protein belongs to the glycosyltransferase 28 family. MurG subfamily.

The protein resides in the cell inner membrane. The enzyme catalyses di-trans,octa-cis-undecaprenyl diphospho-N-acetyl-alpha-D-muramoyl-L-alanyl-D-glutamyl-meso-2,6-diaminopimeloyl-D-alanyl-D-alanine + UDP-N-acetyl-alpha-D-glucosamine = di-trans,octa-cis-undecaprenyl diphospho-[N-acetyl-alpha-D-glucosaminyl-(1-&gt;4)]-N-acetyl-alpha-D-muramoyl-L-alanyl-D-glutamyl-meso-2,6-diaminopimeloyl-D-alanyl-D-alanine + UDP + H(+). Its pathway is cell wall biogenesis; peptidoglycan biosynthesis. Cell wall formation. Catalyzes the transfer of a GlcNAc subunit on undecaprenyl-pyrophosphoryl-MurNAc-pentapeptide (lipid intermediate I) to form undecaprenyl-pyrophosphoryl-MurNAc-(pentapeptide)GlcNAc (lipid intermediate II). The polypeptide is UDP-N-acetylglucosamine--N-acetylmuramyl-(pentapeptide) pyrophosphoryl-undecaprenol N-acetylglucosamine transferase (Xanthomonas oryzae pv. oryzae (strain KACC10331 / KXO85)).